Reading from the N-terminus, the 104-residue chain is Protein ArtA (104 aa).

This Escherichia coli (strain K12) protein is Protein ArtA (artA).